The following is a 117-amino-acid chain: Non-specific lipid-transfer protein (117 aa).

A signal peptide spans 1–26 (MASSAFVKFTCALVMCMMVAAPLAEA). Intrachain disulfides connect cysteine 29–cysteine 76, cysteine 39–cysteine 53, cysteine 54–cysteine 99, and cysteine 74–cysteine 113.

Belongs to the plant LTP family.

Its function is as follows. Plant non-specific lipid-transfer proteins transfer phospholipids as well as galactolipids across membranes. May play a role in wax or cutin deposition in the cell walls of expanding epidermal cells and certain secretory tissues. Also has fungicide activity. The chain is Non-specific lipid-transfer protein (IWF1') from Beta vulgaris (Sugar beet).